Consider the following 346-residue polypeptide: uncharacterized protein (346 aa).

This sequence belongs to the PhyH family.

It localises to the cytoplasm. This is an uncharacterized protein from Saccharomyces cerevisiae (strain ATCC 204508 / S288c) (Baker's yeast).